We begin with the raw amino-acid sequence, 1690 residues long: DNA-directed RNA polymerase subunit beta' (1690 aa).

Cys-63, Cys-65, Cys-78, and Cys-81 together coordinate Zn(2+). Residues Asp-753, Asp-755, and Asp-757 each coordinate Mg(2+). 4 residues coordinate Zn(2+): Cys-1107, Cys-1295, Cys-1302, and Cys-1305.

This sequence belongs to the RNA polymerase beta' chain family. As to quaternary structure, the RNAP catalytic core consists of 2 alpha, 1 beta, 1 beta' and 1 omega subunit. When a sigma factor is associated with the core the holoenzyme is formed, which can initiate transcription. Requires Mg(2+) as cofactor. The cofactor is Zn(2+).

It carries out the reaction RNA(n) + a ribonucleoside 5'-triphosphate = RNA(n+1) + diphosphate. Functionally, DNA-dependent RNA polymerase catalyzes the transcription of DNA into RNA using the four ribonucleoside triphosphates as substrates. This Thermotoga sp. (strain RQ2) protein is DNA-directed RNA polymerase subunit beta'.